The following is a 321-amino-acid chain: Flagellin C (321 aa).

The protein belongs to the bacterial flagellin family.

The protein localises to the secreted. It localises to the bacterial flagellum. Its function is as follows. Flagellin is the subunit protein which polymerizes to form the filaments of bacterial flagella. In Rhizobium meliloti (strain 1021) (Ensifer meliloti), this protein is Flagellin C (flaC).